Consider the following 273-residue polypeptide: Exosome complex component MTR3 (273 aa).

Positions 1 to 36 are disordered; sequence MPGDHRRIRGPEESQPPQLYAAEDDETPAARDPTRL.

Belongs to the RNase PH family. As to quaternary structure, component of the RNA exosome core complex (Exo-9), composed of EXOSC1, EXOSC2, EXOSC3, EXOSC4, EXOSC5, EXOSC6, EXOSC7, EXOSC8 and EXOSC9; within the complex interacts with EXOSC1, EXOSC7 and EXOSC8. The catalytically inactive RNA exosome core complex (Exo-9) associates with the catalytic subunit EXOSC10/RRP6. Exo-9 may associate with DIS3 to form the nucleolar exosome complex, or DIS3L to form the cytoplasmic exosome complex. Exo-9 is formed by a hexameric base ring consisting of the heterodimers EXOSC4-EXOSC9, EXOSC5-EXOSC8 and EXOSC6-EXOSC7, and a cap ring consisting of EXOSC1, EXOSC2 and EXOSC3. The RNA exosome complex associates with cofactors EXOSC10/RRP6, C1D/RRP47, MPHOSPH6/MPP6 and MTREX/MTR4.

The protein resides in the cytoplasm. Its subcellular location is the nucleus. It localises to the nucleolus. Functionally, non-catalytic component of the RNA exosome complex which has 3'-&gt;5' exoribonuclease activity and participates in a multitude of cellular RNA processing and degradation events. In the nucleus, the RNA exosome complex is involved in proper maturation of stable RNA species such as rRNA, snRNA and snoRNA, in the elimination of RNA processing by-products and non-coding 'pervasive' transcripts, such as antisense RNA species and promoter-upstream transcripts (PROMPTs), and of mRNAs with processing defects, thereby limiting or excluding their export to the cytoplasm. The RNA exosome may be involved in Ig class switch recombination (CSR) and/or Ig variable region somatic hypermutation (SHM) by targeting AICDA deamination activity to transcribed dsDNA substrates. In the cytoplasm, the RNA exosome complex is involved in general mRNA turnover and specifically degrades inherently unstable mRNAs containing AU-rich elements (AREs) within their 3' untranslated regions, and in RNA surveillance pathways, preventing translation of aberrant mRNAs. It seems to be involved in degradation of histone mRNA. The catalytic inactive RNA exosome core complex of 9 subunits (Exo-9) is proposed to play a pivotal role in the binding and presentation of RNA for ribonucleolysis, and to serve as a scaffold for the association with catalytic subunits and accessory proteins or complexes. The chain is Exosome complex component MTR3 (Exosc6) from Mus musculus (Mouse).